The primary structure comprises 313 residues: Probable cell division protein WhiA (313 aa).

The segment at residues S277 to E311 is a DNA-binding region (H-T-H motif).

Belongs to the WhiA family.

In terms of biological role, involved in cell division and chromosome segregation. This is Probable cell division protein WhiA from Lactobacillus gasseri (strain ATCC 33323 / DSM 20243 / BCRC 14619 / CIP 102991 / JCM 1131 / KCTC 3163 / NCIMB 11718 / NCTC 13722 / AM63).